The primary structure comprises 301 residues: Phosphatidylglycerol--prolipoprotein diacylglyceryl transferase (301 aa).

The next 4 helical transmembrane spans lie at 10–30 (IAFS…LAGF), 57–77 (LLFY…MLFY), 92–112 (VWEG…AVAW), and 119–139 (MHMF…LGFG). Residue arginine 140 coordinates a 1,2-diacyl-sn-glycero-3-phospho-(1'-sn-glycerol). The next 3 membrane-spanning stretches (helical) occupy residues 202-222 (PSQL…LWLF), 230-250 (YAVS…VEFV), and 264-284 (LTRG…LFWL).

This sequence belongs to the Lgt family.

Its subcellular location is the cell inner membrane. It carries out the reaction L-cysteinyl-[prolipoprotein] + a 1,2-diacyl-sn-glycero-3-phospho-(1'-sn-glycerol) = an S-1,2-diacyl-sn-glyceryl-L-cysteinyl-[prolipoprotein] + sn-glycerol 1-phosphate + H(+). Its pathway is protein modification; lipoprotein biosynthesis (diacylglyceryl transfer). Catalyzes the transfer of the diacylglyceryl group from phosphatidylglycerol to the sulfhydryl group of the N-terminal cysteine of a prolipoprotein, the first step in the formation of mature lipoproteins. The sequence is that of Phosphatidylglycerol--prolipoprotein diacylglyceryl transferase from Xylella fastidiosa (strain M12).